A 397-amino-acid chain; its full sequence is Probable sugar efflux transporter (397 aa).

12 consecutive transmembrane segments (helical) span residues 15–35 (VIVM…PVAL), 51–71 (GLMI…CMLM), 80–100 (LLIS…FAWN), 103–123 (VLLI…SITA), 137–157 (QALG…LPLG), 169–189 (TFTL…RLLP), 209–229 (PMLI…FTAY), 246–266 (KATA…VLFS), 277–297 (LLSS…VSGI), 299–319 (GAIF…SLAM), 333–353 (VATA…ALIG), and 365–385 (IGYV…LMFL).

Belongs to the major facilitator superfamily. SotB (TC 2.A.1.2) family.

It is found in the cell inner membrane. In terms of biological role, involved in the efflux of sugars. The physiological role may be the reduction of the intracellular concentration of toxic sugars or sugar metabolites. This Mannheimia succiniciproducens (strain KCTC 0769BP / MBEL55E) protein is Probable sugar efflux transporter.